A 231-amino-acid chain; its full sequence is Phosphatidylserine decarboxylase proenzyme (231 aa).

Ser188 functions as the Schiff-base intermediate with substrate; via pyruvic acid in the catalytic mechanism. Ser188 is modified (pyruvic acid (Ser); by autocatalysis).

It belongs to the phosphatidylserine decarboxylase family. PSD-A subfamily. In terms of assembly, heterodimer of a large membrane-associated beta subunit and a small pyruvoyl-containing alpha subunit. It depends on pyruvate as a cofactor. Is synthesized initially as an inactive proenzyme. Formation of the active enzyme involves a self-maturation process in which the active site pyruvoyl group is generated from an internal serine residue via an autocatalytic post-translational modification. Two non-identical subunits are generated from the proenzyme in this reaction, and the pyruvate is formed at the N-terminus of the alpha chain, which is derived from the carboxyl end of the proenzyme. The post-translation cleavage follows an unusual pathway, termed non-hydrolytic serinolysis, in which the side chain hydroxyl group of the serine supplies its oxygen atom to form the C-terminus of the beta chain, while the remainder of the serine residue undergoes an oxidative deamination to produce ammonia and the pyruvoyl prosthetic group on the alpha chain.

It localises to the cell membrane. It carries out the reaction a 1,2-diacyl-sn-glycero-3-phospho-L-serine + H(+) = a 1,2-diacyl-sn-glycero-3-phosphoethanolamine + CO2. It participates in phospholipid metabolism; phosphatidylethanolamine biosynthesis; phosphatidylethanolamine from CDP-diacylglycerol: step 2/2. Its function is as follows. Catalyzes the formation of phosphatidylethanolamine (PtdEtn) from phosphatidylserine (PtdSer). The sequence is that of Phosphatidylserine decarboxylase proenzyme from Rickettsia akari (strain Hartford).